A 391-amino-acid polypeptide reads, in one-letter code: uncharacterized protein (391 aa).

Residues 4-24 (FALIVGIVALAIFSFLYIQLY) form a helical membrane-spanning segment.

The protein localises to the membrane. This is an uncharacterized protein from Haemophilus influenzae (strain ATCC 51907 / DSM 11121 / KW20 / Rd).